Consider the following 1960-residue polypeptide: Myosin-9 (1960 aa).

Alanine 2 bears the N-acetylalanine mark. The segment at 2-838 (AQQAADKYLY…RLFTKVKPLL (837 aa)) is mediates interaction with LIMCH1. N6-acetyllysine is present on lysine 8. Residue tyrosine 11 is modified to Phosphotyrosine. Positions 27–77 (AAKKLVWVPSDKSGFEPASLKEEVGEEAIVELVENGKKVKVNKDDIQKMNP) constitute a Myosin N-terminal SH3-like domain. Positions 81–776 (SKVEDMAELT…VLAHLEEERD (696 aa)) constitute a Myosin motor domain. N6-acetyllysine is present on lysine 102. 174–181 (GESGAGKT) is an ATP binding site. N6-acetyllysine occurs at positions 299, 435, and 613. Serine 628 bears the Phosphoserine mark. The segment at 654–676 (LAKLMATLRNTNPNFVRCIIPNH) is actin-binding. Position 754 is a phosphotyrosine (tyrosine 754). The region spanning 779-808 (ITDVIIGFQACCRGYLARKAFAKRQQQLTA) is the IQ domain. Residues 837 to 1926 (LLQVSRQEEE…LKNKLRRGDL (1090 aa)) are a coiled coil. An N6-succinyllysine modification is found at lysine 850. An N6-acetyllysine mark is found at lysine 860, lysine 975, and lysine 1024. Serine 1114 bears the Phosphoserine mark. The disordered stretch occupies residues 1117 to 1137 (QEDLESERASRNKAEKQKRDL). A compositionally biased stretch (basic and acidic residues) spans 1122–1137 (SERASRNKAEKQKRDL). An N6-acetyllysine mark is found at lysine 1234, lysine 1249, lysine 1357, lysine 1392, lysine 1404, lysine 1410, lysine 1459, and lysine 1638. Lysine 1669 carries the post-translational modification N6-succinyllysine. Serine 1714 bears the Phosphoserine mark. Lysine 1793, lysine 1802, and lysine 1845 each carry N6-acetyllysine. Residues 1877–1918 (RQLEEAEEEAQRANASRRKLQRELEDATETADAMNREVSSLK) form a disordered region. Arginine 1923 carries the omega-N-methylarginine modification. The interval 1934 to 1960 (VARKGAGDCSDEEVDGKADGAEAKAAE) is disordered. Serine 1943 is subject to Phosphoserine. Basic and acidic residues predominate over residues 1948–1960 (DGKADGAEAKAAE).

It belongs to the TRAFAC class myosin-kinesin ATPase superfamily. Myosin family. Myosin is a hexameric protein that consists of 2 heavy chain subunits (MHC), 2 alkali light chain subunits (MLC) and 2 regulatory light chain subunits (MLC-2). Interacts with RASIP1. Interacts with DDR1. Interacts with PDLIM2. Interacts with SVIL. Interacts with HTRA3. Interacts with Myo7a. Interacts with CFAP95. Interacts with LIMCH1; independently of the integration of MYH9 into the myosin complex. Interacts with RAB3A. Interacts with ZBED4. Interacts with S100A4; this interaction increases cell motility. ISGylated. Post-translationally, ubiquitination.

It localises to the cytoplasm. Its subcellular location is the cytoskeleton. The protein resides in the cell cortex. It is found in the cytoplasmic vesicle. The protein localises to the secretory vesicle. It localises to the cortical granule. Its function is as follows. Cellular myosin that appears to play a role in cytokinesis, cell shape, and specialized functions such as secretion and capping. Required for cortical actin clearance prior to oocyte exocytosis. Promotes cell motility in conjunction with S100A4. During cell spreading, plays an important role in cytoskeleton reorganization, focal contact formation (in the margins but not the central part of spreading cells), and lamellipodial retraction; this function is mechanically antagonized by MYH10. The protein is Myosin-9 (MYH9) of Canis lupus familiaris (Dog).